Here is an 872-residue protein sequence, read N- to C-terminus: Telomerase component p95 (872 aa).

Disordered regions lie at residues 55–75 (NQDQ…NSNK) and 471–492 (KNNK…ESTS). A compositionally biased stretch (basic and acidic residues) spans 474–486 (KNQEETPETKDET).

Telomerase consist of two subunit, p80 and p95 that form a 1:1:1 complex with the 159 nt telomerase RNA.

Its subcellular location is the nucleus. It is found in the chromosome. The protein localises to the telomere. It carries out the reaction DNA(n) + a 2'-deoxyribonucleoside 5'-triphosphate = DNA(n+1) + diphosphate. Its function is as follows. Ribonucleoprotein DNA polymerase that catalyzes the de novo synthesis of telomeric simple sequence repeats. Subunit p95 contains some or all of the template-independent primer DNA-binding site termed the anchor site. This is Telomerase component p95 from Tetrahymena thermophila.